Consider the following 405-residue polypeptide: Double C2-like domain-containing protein alpha (405 aa).

The interval 1–94 is interaction with UNC13D and DYNLT1; sequence MRGRRGDRMT…DSYDSDDTTA (94 aa). Residues 34 to 54 are disordered; the sequence is DYFPRRGPGPEGGGGGGGTGC. Gly residues predominate over residues 42–54; that stretch reads GPEGGGGGGGTGC. 2 C2 domains span residues 94 to 216 and 256 to 389; these read ALGT…HFNI and ERGR…ERWH. Positions 125, 131, 186, 188, 287, 293, 347, 349, and 355 each coordinate Ca(2+). The tract at residues 220-405 is interaction with UNC13D; it reads RQVPLPSPSS…PPAAGAYPLA (186 aa).

Interacts (via N-terminus) with UNC13A. Interacts with cytoplasmic dynein light chain DYNLT1. Interacts with UNC13D. Ca(2+) is required as a cofactor. As to expression, brain and mast cells.

It is found in the cytoplasmic vesicle. The protein resides in the secretory vesicle. The protein localises to the synaptic vesicle membrane. It localises to the synapse. Its subcellular location is the synaptosome. It is found in the lysosome. Calcium sensor which most probably regulates fusion of vesicles with membranes. Binds calcium and phospholipids. May be involved in calcium dependent neurotransmitter release through the interaction with UNC13A. May be involved in calcium-dependent spontaneous release of neurotransmitter in absence of action potentials in neuronal cells. Regulates Ca(2+)-dependent secretory lysosome exocytosis in mast cells. The chain is Double C2-like domain-containing protein alpha (Doc2a) from Mus musculus (Mouse).